Reading from the N-terminus, the 541-residue chain is MGNCFAKNHGLMKPQQNGNTTRSVEVGVTNQDPPSYTPQARTTQQPEKPGSVNSQPPPWRAAAAAPGLSPKTTTKSNSILENAFEDVKLFYTLGKELGRGQFGVTYLCTENSTGKKYACKSISKKKLVTKADKDDMRREIQIMQHLSGQPNIVEFKGAYEDEKAVNLVMELCAGGELFDRIIAKGHYTERAAASVCRQIVNVVKICHFMGVLHRDLKPENFLLSSKDEKALIKATDFGLSVFIEEGKVYRDIVGSAYYVAPEVLRRRYGKEVDIWSAGIILYILLSGVPPFWAETEKGIFDAILEGHIDFESQPWPSISSSAKDLVRRMLTADPKRRISAADVLQHPWLREGGEASDKPIDSAVLSRMKQFRAMNKLKKLALKVIAENIDTEEIQGLKAMFANIDTDNSGTITYEELKEGLAKLGSKLTEAEVKQLMDAADVDGNGSIDYIEFITATMHRHRLESNENLYKAFQHFDKDSSGYITIDELESALKEYGMGDDATIKEVLSDVDSDNDGRINYEEFCAMMRSGNPQQQQPRLF.

The interval 1–75 (MGNCFAKNHG…PGLSPKTTTK (75 aa)) is disordered. Gly-2 carries the N-myristoyl glycine lipid modification. The segment covering 14 to 54 (PQQNGNTTRSVEVGVTNQDPPSYTPQARTTQQPEKPGSVNS) has biased composition (polar residues). Ser-69 is subject to Phosphoserine. Residues 91-349 (YTLGKELGRG…AADVLQHPWL (259 aa)) form the Protein kinase domain. ATP contacts are provided by residues 97–105 (LGRGQFGVT) and Lys-120. The Proton acceptor role is filled by Asp-215. Ser-255 is subject to Phosphoserine. Residues 355 to 385 (ASDKPIDSAVLSRMKQFRAMNKLKKLALKVI) are autoinhibitory domain. 4 EF-hand domains span residues 392–427 (EEIQ…LGSK), 428–463 (LTEA…RHRL), 464–499 (ESNE…YGMG), and 500–534 (DDAT…GNPQ). Residues Asp-405, Asp-407, Ser-409, Thr-411, Glu-416, Asp-441, Asp-443, Asn-445, Ser-447, Glu-452, Asp-477, Asp-479, Ser-481, Tyr-483, Glu-488, Asp-512, Asp-514, Asp-516, Arg-518, and Glu-523 each contribute to the Ca(2+) site.

This sequence belongs to the protein kinase superfamily. Ser/Thr protein kinase family. CDPK subfamily.

The protein localises to the cell membrane. The enzyme catalyses L-seryl-[protein] + ATP = O-phospho-L-seryl-[protein] + ADP + H(+). It catalyses the reaction L-threonyl-[protein] + ATP = O-phospho-L-threonyl-[protein] + ADP + H(+). Activated by calcium. Autophosphorylation may play an important role in the regulation of the kinase activity. Its function is as follows. May play a role in signal transduction pathways that involve calcium as a second messenger. The protein is Calcium-dependent protein kinase 9 (CPK9) of Arabidopsis thaliana (Mouse-ear cress).